Consider the following 128-residue polypeptide: Sulfurtransferase TusD (128 aa).

The active-site Cysteine persulfide intermediate is the C78.

Belongs to the DsrE/TusD family. As to quaternary structure, heterohexamer, formed by a dimer of trimers. The hexameric TusBCD complex contains 2 copies each of TusB, TusC and TusD. The TusBCD complex interacts with TusE.

Its subcellular location is the cytoplasm. Part of a sulfur-relay system required for 2-thiolation of 5-methylaminomethyl-2-thiouridine (mnm(5)s(2)U) at tRNA wobble positions. Accepts sulfur from TusA and transfers it in turn to TusE. This Salmonella dublin (strain CT_02021853) protein is Sulfurtransferase TusD.